Consider the following 279-residue polypeptide: DNA repair protein RecO (279 aa).

This sequence belongs to the RecO family.

Its function is as follows. Involved in DNA repair and RecF pathway recombination. The chain is DNA repair protein RecO from Thermosynechococcus vestitus (strain NIES-2133 / IAM M-273 / BP-1).